Reading from the N-terminus, the 95-residue chain is Mitochondrial import inner membrane translocase subunit Tim13 (95 aa).

Positions 46 to 69 match the Twin CX3C motif motif; that stretch reads CFKKCIGKPGSTLDNSEQKCIAMC. 2 disulfide bridges follow: cysteine 46–cysteine 69 and cysteine 50–cysteine 65.

The protein belongs to the small Tim family. In terms of assembly, heterohexamer; composed of 3 copies of TIMM8 (TIMM8A or TIMM8B) and 3 copies of TIMM13, named soluble 70 kDa complex. Associates with the TIM22 complex, whose core is composed of TIMM22.

The protein localises to the mitochondrion inner membrane. Functionally, mitochondrial intermembrane chaperone that participates in the import and insertion of some multi-pass transmembrane proteins into the mitochondrial inner membrane. Also required for the transfer of beta-barrel precursors from the TOM complex to the sorting and assembly machinery (SAM complex) of the outer membrane. Acts as a chaperone-like protein that protects the hydrophobic precursors from aggregation and guide them through the mitochondrial intermembrane space. The TIMM8-TIMM13 complex mediates the import of some proteins while the predominant TIMM9-TIMM10 70 kDa complex mediates the import of much more proteins. The chain is Mitochondrial import inner membrane translocase subunit Tim13 (timm13) from Danio rerio (Zebrafish).